The primary structure comprises 2512 residues: Fatty acid synthase (2512 aa).

Glu2 carries the N-acetylglutamate modification. Positions 2-406 (EDVVIAGIAG…GSNAHVILRP (405 aa)) constitute a Ketosynthase family 3 (KS3) domain. Residues Cys161, His293, and His331 each act as for beta-ketoacyl synthase activity in the active site. Residues 427 to 815 (GRTQEAVEIL…GINVLGNNLF (389 aa)) form an acyl and malonyl transferases region. Catalysis depends on Ser580, which acts as the For acyl/malonyl transferase activity. An acyl-CoA-binding positions include 646–647 (DT), Phe670, and Arg772. The segment at 844 to 967 (PKAEDFPSGS…ISLLENDALK (124 aa)) is N-terminal hotdog fold. The PKS/mFAS DH domain occupies 844 to 1111 (PKAEDFPSGS…ASVAPRRQQE (268 aa)). Residue His878 is the Proton acceptor; for dehydratase activity of the active site. Positions 984 to 1111 (AKSGLLMEDV…ASVAPRRQQE (128 aa)) are C-terminal hotdog fold. Asp1034 (proton donor; for dehydratase activity) is an active-site residue. At Cys1475 the chain carries S-nitrosocysteine. The segment at 1638 to 1866 (WEVPENWTLE…MIKIQEEEKQ (229 aa)) is enoyl reductase. Residue 1675–1692 (VLIHSGSGGVGQAAIAIA) participates in NADP(+) binding. At Lys1708 the chain carries N6-(pyridoxal phosphate)lysine. The beta-ketoacyl reductase stretch occupies residues 1867–2119 (YPLRSEPVKL…SFVLAEKVSV (253 aa)). 1889–1904 (SYIITGGLGGFGLELA) provides a ligand contact to NADP(+). Cys2093 carries the S-nitrosocysteine modification. A Carrier domain is found at 2120–2200 (KSEGGSQRDL…ELSSKTGTAE (81 aa)). Ser2158 bears the O-(pantetheine 4'-phosphoryl)serine mark. Residues 2209 to 2511 (KTGPGEPPKL…LAEPRVSVRE (303 aa)) are thioesterase. Residues Ser2309 and His2482 each act as for thioesterase activity in the active site.

In terms of assembly, homodimer which is arranged in a head to tail fashion. Post-translationally, S-nitrosylation of Fatty acid synthase at cysteine residues Cys-1475 or Cys-2093 is important for the enzyme dimerization. In adipocytes, S-nitrosylation of Fatty acid synthase occurs under physiological conditions and gradually increases during adipogenesis.

It catalyses the reaction acetyl-CoA + n malonyl-CoA + 2n NADPH + 2n H(+) = a long-chain fatty acid + (n+1) CoA + n CO2 + 2n NADP(+).. The catalysed reaction is holo-[ACP] + acetyl-CoA = acetyl-[ACP] + CoA. The enzyme catalyses holo-[ACP] + malonyl-CoA = malonyl-[ACP] + CoA. It carries out the reaction a fatty acyl-[ACP] + malonyl-[ACP] + H(+) = a 3-oxoacyl-[ACP] + holo-[ACP] + CO2. It catalyses the reaction a (3R)-hydroxyacyl-[ACP] + NADP(+) = a 3-oxoacyl-[ACP] + NADPH + H(+). The catalysed reaction is a (3R)-hydroxyacyl-[ACP] = a (2E)-enoyl-[ACP] + H2O. The enzyme catalyses a 2,3-saturated acyl-[ACP] + NADP(+) = a (2E)-enoyl-[ACP] + NADPH + H(+). It carries out the reaction hexadecanoyl-[ACP] + H2O = hexadecanoate + holo-[ACP] + H(+). It catalyses the reaction acetyl-[ACP] + malonyl-[ACP] + H(+) = 3-oxobutanoyl-[ACP] + holo-[ACP] + CO2. The catalysed reaction is 3-oxobutanoyl-[ACP] + NADPH + H(+) = (3R)-hydroxybutanoyl-[ACP] + NADP(+). The enzyme catalyses (3R)-hydroxybutanoyl-[ACP] = (2E)-butenoyl-[ACP] + H2O. It carries out the reaction (2E)-butenoyl-[ACP] + NADPH + H(+) = butanoyl-[ACP] + NADP(+). It catalyses the reaction butanoyl-[ACP] + malonyl-[ACP] + H(+) = 3-oxohexanoyl-[ACP] + holo-[ACP] + CO2. The catalysed reaction is 3-oxohexanoyl-[ACP] + NADPH + H(+) = (3R)-hydroxyhexanoyl-[ACP] + NADP(+). The enzyme catalyses (3R)-hydroxyhexanoyl-[ACP] = (2E)-hexenoyl-[ACP] + H2O. It carries out the reaction (2E)-hexenoyl-[ACP] + NADPH + H(+) = hexanoyl-[ACP] + NADP(+). It catalyses the reaction hexanoyl-[ACP] + malonyl-[ACP] + H(+) = 3-oxooctanoyl-[ACP] + holo-[ACP] + CO2. The catalysed reaction is 3-oxooctanoyl-[ACP] + NADPH + H(+) = (3R)-hydroxyoctanoyl-[ACP] + NADP(+). The enzyme catalyses (3R)-hydroxyoctanoyl-[ACP] = (2E)-octenoyl-[ACP] + H2O. It carries out the reaction (2E)-octenoyl-[ACP] + NADPH + H(+) = octanoyl-[ACP] + NADP(+). It catalyses the reaction octanoyl-[ACP] + malonyl-[ACP] + H(+) = 3-oxodecanoyl-[ACP] + holo-[ACP] + CO2. The catalysed reaction is 3-oxodecanoyl-[ACP] + NADPH + H(+) = (3R)-hydroxydecanoyl-[ACP] + NADP(+). The enzyme catalyses (3R)-hydroxydecanoyl-[ACP] = (2E)-decenoyl-[ACP] + H2O. It carries out the reaction (2E)-decenoyl-[ACP] + NADPH + H(+) = decanoyl-[ACP] + NADP(+). It catalyses the reaction decanoyl-[ACP] + malonyl-[ACP] + H(+) = 3-oxododecanoyl-[ACP] + holo-[ACP] + CO2. The catalysed reaction is 3-oxododecanoyl-[ACP] + NADPH + H(+) = (3R)-hydroxydodecanoyl-[ACP] + NADP(+). The enzyme catalyses (3R)-hydroxydodecanoyl-[ACP] = (2E)-dodecenoyl-[ACP] + H2O. It carries out the reaction (2E)-dodecenoyl-[ACP] + NADPH + H(+) = dodecanoyl-[ACP] + NADP(+). It catalyses the reaction dodecanoyl-[ACP] + malonyl-[ACP] + H(+) = 3-oxotetradecanoyl-[ACP] + holo-[ACP] + CO2. The catalysed reaction is 3-oxotetradecanoyl-[ACP] + NADPH + H(+) = (3R)-hydroxytetradecanoyl-[ACP] + NADP(+). The enzyme catalyses (3R)-hydroxytetradecanoyl-[ACP] = (2E)-tetradecenoyl-[ACP] + H2O. It carries out the reaction (2E)-tetradecenoyl-[ACP] + NADPH + H(+) = tetradecanoyl-[ACP] + NADP(+). It catalyses the reaction tetradecanoyl-[ACP] + malonyl-[ACP] + H(+) = 3-oxohexadecanoyl-[ACP] + holo-[ACP] + CO2. The catalysed reaction is 3-oxohexadecanoyl-[ACP] + NADPH + H(+) = (3R)-hydroxyhexadecanoyl-[ACP] + NADP(+). The enzyme catalyses (3R)-hydroxyhexadecanoyl-[ACP] = (2E)-hexadecenoyl-[ACP] + H2O. It carries out the reaction (2E)-hexadecenoyl-[ACP] + NADPH + H(+) = hexadecanoyl-[ACP] + NADP(+). It catalyses the reaction hexadecanoyl-[ACP] + malonyl-[ACP] + H(+) = 3-oxooctadecanoyl-[ACP] + holo-[ACP] + CO2. The catalysed reaction is 3-oxooctadecanoyl-[ACP] + NADPH + H(+) = (3R)-hydroxyoctadecanoyl-[ACP] + NADP(+). The enzyme catalyses (3R)-hydroxyoctadecanoyl-[ACP] = (2E)-octadecenoyl-[ACP] + H2O. It carries out the reaction (2E)-octadecenoyl-[ACP] + NADPH + H(+) = octadecanoyl-[ACP] + NADP(+). It catalyses the reaction tetradecanoyl-[ACP] + H2O = tetradecanoate + holo-[ACP] + H(+). The catalysed reaction is octadecanoyl-[ACP] + H2O = octadecanoate + holo-[ACP] + H(+). Its pathway is lipid metabolism; fatty acid biosynthesis. Its activity is regulated as follows. Cerulenin, a potent non-competitive pharmacological inhibitor of FAS, binds covalently to the active site of the condensing enzyme region, inactivating a key enzyme step in fatty acid synthesis. In terms of biological role, fatty acid synthetase is a multifunctional enzyme that catalyzes the de novo biosynthesis of long-chain saturated fatty acids starting from acetyl-CoA and malonyl-CoA in the presence of NADPH. This multifunctional protein contains 7 catalytic activities and a site for the binding of the prosthetic group 4'-phosphopantetheine of the acyl carrier protein ([ACP]) domain. The sequence is that of Fatty acid synthase (FASN) from Gallus gallus (Chicken).